Reading from the N-terminus, the 569-residue chain is Proline--tRNA ligase (569 aa).

Belongs to the class-II aminoacyl-tRNA synthetase family. ProS type 1 subfamily. In terms of assembly, homodimer.

The protein localises to the cytoplasm. The enzyme catalyses tRNA(Pro) + L-proline + ATP = L-prolyl-tRNA(Pro) + AMP + diphosphate. Its function is as follows. Catalyzes the attachment of proline to tRNA(Pro) in a two-step reaction: proline is first activated by ATP to form Pro-AMP and then transferred to the acceptor end of tRNA(Pro). As ProRS can inadvertently accommodate and process non-cognate amino acids such as alanine and cysteine, to avoid such errors it has two additional distinct editing activities against alanine. One activity is designated as 'pretransfer' editing and involves the tRNA(Pro)-independent hydrolysis of activated Ala-AMP. The other activity is designated 'posttransfer' editing and involves deacylation of mischarged Ala-tRNA(Pro). The misacylated Cys-tRNA(Pro) is not edited by ProRS. This chain is Proline--tRNA ligase, found in Shewanella woodyi (strain ATCC 51908 / MS32).